A 482-amino-acid polypeptide reads, in one-letter code: GTPase Obg (482 aa).

Positions 2 to 159 constitute an Obg domain; it reads PRFVDRVVIH…VDLTLELKTV (158 aa). One can recognise an OBG-type G domain in the interval 160-340; it reads ADVGLVGFPS…LTFALWEMIV (181 aa). GTP contacts are provided by residues 166-173, 191-195, 212-215, 292-295, and 321-323; these read GFPSAGKS, FTTLV, DVPG, NKVD, and STL. Mg(2+) contacts are provided by Ser173 and Thr193. An OCT domain is found at 358–438; that stretch reads PIPVDESGFT…IGDMTFDWEP (81 aa). Positions 441–482 are disordered; sequence PAGVDVTMSGRGTDARIDKTDRVGAAERRQARRVRRGQVEPE. Positions 453 to 469 are enriched in basic and acidic residues; the sequence is TDARIDKTDRVGAAERR.

The protein belongs to the TRAFAC class OBG-HflX-like GTPase superfamily. OBG GTPase family. Monomer. Mg(2+) is required as a cofactor.

The protein resides in the cytoplasm. Functionally, an essential GTPase which binds GTP, GDP and possibly (p)ppGpp with moderate affinity, with high nucleotide exchange rates and a fairly low GTP hydrolysis rate. Plays a role in control of the cell cycle, stress response, ribosome biogenesis and in those bacteria that undergo differentiation, in morphogenesis control. In Mycobacteroides abscessus (strain ATCC 19977 / DSM 44196 / CCUG 20993 / CIP 104536 / JCM 13569 / NCTC 13031 / TMC 1543 / L948) (Mycobacterium abscessus), this protein is GTPase Obg.